Consider the following 572-residue polypeptide: Proline--tRNA ligase (572 aa).

It belongs to the class-II aminoacyl-tRNA synthetase family. ProS type 1 subfamily. As to quaternary structure, homodimer.

Its subcellular location is the cytoplasm. The catalysed reaction is tRNA(Pro) + L-proline + ATP = L-prolyl-tRNA(Pro) + AMP + diphosphate. Catalyzes the attachment of proline to tRNA(Pro) in a two-step reaction: proline is first activated by ATP to form Pro-AMP and then transferred to the acceptor end of tRNA(Pro). As ProRS can inadvertently accommodate and process non-cognate amino acids such as alanine and cysteine, to avoid such errors it has two additional distinct editing activities against alanine. One activity is designated as 'pretransfer' editing and involves the tRNA(Pro)-independent hydrolysis of activated Ala-AMP. The other activity is designated 'posttransfer' editing and involves deacylation of mischarged Ala-tRNA(Pro). The misacylated Cys-tRNA(Pro) is not edited by ProRS. This chain is Proline--tRNA ligase, found in Leuconostoc mesenteroides subsp. mesenteroides (strain ATCC 8293 / DSM 20343 / BCRC 11652 / CCM 1803 / JCM 6124 / NCDO 523 / NBRC 100496 / NCIMB 8023 / NCTC 12954 / NRRL B-1118 / 37Y).